The following is a 277-amino-acid chain: NH(3)-dependent NAD(+) synthetase (277 aa).

36 to 43 serves as a coordination point for ATP; it reads GLSGGIDS. D42 contributes to the Mg(2+) binding site. R118 contacts deamido-NAD(+). T138 contacts ATP. E143 contacts Mg(2+). Residues K167 and S189 each coordinate ATP.

The protein belongs to the NAD synthetase family. Homodimer.

It carries out the reaction deamido-NAD(+) + NH4(+) + ATP = AMP + diphosphate + NAD(+) + H(+). It functions in the pathway cofactor biosynthesis; NAD(+) biosynthesis; NAD(+) from deamido-NAD(+) (ammonia route): step 1/1. In terms of biological role, catalyzes the ATP-dependent amidation of deamido-NAD to form NAD. Uses ammonia as a nitrogen source. This Pelodictyon phaeoclathratiforme (strain DSM 5477 / BU-1) protein is NH(3)-dependent NAD(+) synthetase.